The chain runs to 147 residues: D-aminoacyl-tRNA deacylase (147 aa).

The Gly-cisPro motif, important for rejection of L-amino acids motif lies at 137–138 (GP).

Belongs to the DTD family. As to quaternary structure, homodimer.

The protein resides in the cytoplasm. The enzyme catalyses glycyl-tRNA(Ala) + H2O = tRNA(Ala) + glycine + H(+). It carries out the reaction a D-aminoacyl-tRNA + H2O = a tRNA + a D-alpha-amino acid + H(+). Functionally, an aminoacyl-tRNA editing enzyme that deacylates mischarged D-aminoacyl-tRNAs. Also deacylates mischarged glycyl-tRNA(Ala), protecting cells against glycine mischarging by AlaRS. Acts via tRNA-based rather than protein-based catalysis; rejects L-amino acids rather than detecting D-amino acids in the active site. By recycling D-aminoacyl-tRNA to D-amino acids and free tRNA molecules, this enzyme counteracts the toxicity associated with the formation of D-aminoacyl-tRNA entities in vivo and helps enforce protein L-homochirality. This is D-aminoacyl-tRNA deacylase from Bacillus velezensis (strain DSM 23117 / BGSC 10A6 / LMG 26770 / FZB42) (Bacillus amyloliquefaciens subsp. plantarum).